Consider the following 306-residue polypeptide: UDP-3-O-acyl-N-acetylglucosamine deacetylase (306 aa).

Positions 79, 238, and 242 each coordinate Zn(2+). Residue His-265 is the Proton donor of the active site.

The protein belongs to the LpxC family. The cofactor is Zn(2+).

It carries out the reaction a UDP-3-O-[(3R)-3-hydroxyacyl]-N-acetyl-alpha-D-glucosamine + H2O = a UDP-3-O-[(3R)-3-hydroxyacyl]-alpha-D-glucosamine + acetate. It functions in the pathway glycolipid biosynthesis; lipid IV(A) biosynthesis; lipid IV(A) from (3R)-3-hydroxytetradecanoyl-[acyl-carrier-protein] and UDP-N-acetyl-alpha-D-glucosamine: step 2/6. Catalyzes the hydrolysis of UDP-3-O-myristoyl-N-acetylglucosamine to form UDP-3-O-myristoylglucosamine and acetate, the committed step in lipid A biosynthesis. This is UDP-3-O-acyl-N-acetylglucosamine deacetylase from Shewanella frigidimarina (strain NCIMB 400).